Here is a 123-residue protein sequence, read N- to C-terminus: Small ribosomal subunit protein uS12 (123 aa).

Basic residues predominate over residues 10 to 20 (KGRKKVKKKKT). The disordered stretch occupies residues 10–32 (KGRKKVKKKKTAPALQGSPQKRG). A 3-methylthioaspartic acid modification is found at D89.

The protein belongs to the universal ribosomal protein uS12 family. As to quaternary structure, part of the 30S ribosomal subunit. Contacts proteins S8 and S17. May interact with IF1 in the 30S initiation complex.

With S4 and S5 plays an important role in translational accuracy. In terms of biological role, interacts with and stabilizes bases of the 16S rRNA that are involved in tRNA selection in the A site and with the mRNA backbone. Located at the interface of the 30S and 50S subunits, it traverses the body of the 30S subunit contacting proteins on the other side and probably holding the rRNA structure together. The combined cluster of proteins S8, S12 and S17 appears to hold together the shoulder and platform of the 30S subunit. The chain is Small ribosomal subunit protein uS12 from Halothermothrix orenii (strain H 168 / OCM 544 / DSM 9562).